A 421-amino-acid chain; its full sequence is Immunoglobulin heavy constant epsilon (421 aa).

4 consecutive Ig-like domains span residues 5–97 (PQLY…VNIT), 99–184 (PTLE…KVTS), 201–301 (PRGV…RSIT), and 310–410 (PEVY…KTIS). Cys-23 and Cys-75 are disulfide-bonded. N-linked (GlcNAc...) asparagine glycans are attached at residues Asn-43, Asn-72, Asn-84, Asn-95, Asn-166, Asn-238, Asn-261, Asn-365, and Asn-415. 3 cysteine pairs are disulfide-bonded: Cys-121-Cys-180, Cys-226-Cys-285, and Cys-330-Cys-392.

As to quaternary structure, the basic structural unit consists of two identical heavy chains and two identical light chains; disulfide-linked. N-terminal variable regions of the heavy and light chains form the antigen binding sites, whereas the C-terminal constant regions of the heavy chains interact with immune receptors to mediate effector functions.

It localises to the secreted. It is found in the cell membrane. Constant region of immunoglobulin heavy chains. Immunoglobulins, also known as antibodies, are membrane-bound or secreted glycoproteins produced by B lymphocytes. In the recognition phase of humoral immunity, the membrane-bound immunoglobulins serve as receptors which, upon binding of a specific antigen, trigger the clonal expansion and differentiation of B lymphocytes into immunoglobulins-secreting plasma cells. Secreted immunoglobulins mediate the effector phase of humoral immunity, which results in the elimination of bound antigens. The antigen binding site is formed by the variable domain of one heavy chain, together with that of its associated light chain. Thus, each immunoglobulin has two antigen binding sites with remarkable affinity for a particular antigen. The variable domains are assembled by a process called V-(D)-J rearrangement and can then be subjected to somatic hypermutations which, after exposure to antigen and selection, allow affinity maturation for a particular antigen. The chain is Immunoglobulin heavy constant epsilon from Mus musculus (Mouse).